A 101-amino-acid polypeptide reads, in one-letter code: Urease subunit gamma (101 aa).

Belongs to the urease gamma subunit family. Heterotrimer of UreA (gamma), UreB (beta) and UreC (alpha) subunits. Three heterotrimers associate to form the active enzyme.

The protein resides in the cytoplasm. The enzyme catalyses urea + 2 H2O + H(+) = hydrogencarbonate + 2 NH4(+). Its pathway is nitrogen metabolism; urea degradation; CO(2) and NH(3) from urea (urease route): step 1/1. This Ureaplasma urealyticum serovar 10 (strain ATCC 33699 / Western) protein is Urease subunit gamma.